We begin with the raw amino-acid sequence, 397 residues long: Ornithine aminotransferase (397 aa).

Lysine 255 bears the N6-(pyridoxal phosphate)lysine mark.

The protein belongs to the class-III pyridoxal-phosphate-dependent aminotransferase family. OAT subfamily. Pyridoxal 5'-phosphate serves as cofactor.

The protein resides in the cytoplasm. It catalyses the reaction a 2-oxocarboxylate + L-ornithine = L-glutamate 5-semialdehyde + an L-alpha-amino acid. It functions in the pathway amino-acid biosynthesis; L-proline biosynthesis; L-glutamate 5-semialdehyde from L-ornithine: step 1/1. Functionally, catalyzes the interconversion of ornithine to glutamate semialdehyde. The protein is Ornithine aminotransferase of Macrococcus caseolyticus (strain JCSC5402) (Macrococcoides caseolyticum).